A 105-amino-acid polypeptide reads, in one-letter code: MKTKVFLGLILSAAVTACLCRPAAKAPGGSHRPTSSLARRDWPEPPSQEQQQRFISRFLPHVFAELSDRKGFVQGNGAVEALHDHFYPDWMDFGRRSTEDAADAA.

The first 20 residues, 1 to 20 (MKTKVFLGLILSAAVTACLC), serve as a signal peptide directing secretion. Residues 21-38 (RPAAKAPGGSHRPTSSLA) constitute a propeptide that is removed on maturation. Residues 24–51 (AKAPGGSHRPTSSLARRDWPEPPSQEQQ) are disordered. Tyr87 bears the Sulfotyrosine mark. Phe93 bears the Phenylalanine amide mark. A propeptide spanning residues 97-105 (STEDAADAA) is cleaved from the precursor.

It belongs to the gastrin/cholecystokinin family.

The protein resides in the secreted. Potent stimulus of gastric acid, but not of pancreatic secretion. The protein is Gastrin/cholecystokinin-like peptide of Gallus gallus (Chicken).